Reading from the N-terminus, the 102-residue chain is Nucleoid-associated protein WIGBR5260 (102 aa).

The protein belongs to the YbaB/EbfC family. Homodimer.

It is found in the cytoplasm. It localises to the nucleoid. Binds to DNA and alters its conformation. May be involved in regulation of gene expression, nucleoid organization and DNA protection. This chain is Nucleoid-associated protein WIGBR5260, found in Wigglesworthia glossinidia brevipalpis.